The chain runs to 330 residues: Tryptophan--tRNA ligase (330 aa).

Residues 6 to 8 (QPT) and 14 to 15 (GN) contribute to the ATP site. A 'HIGH' region motif is present at residues 7-15 (PTGSLHLGN). Asp130 serves as a coordination point for L-tryptophan. Residues 142–144 (GED), Val185, and 194–198 (KMSKS) each bind ATP. The short motif at 194–198 (KMSKS) is the 'KMSKS' region element.

This sequence belongs to the class-I aminoacyl-tRNA synthetase family. Homodimer.

Its subcellular location is the cytoplasm. The catalysed reaction is tRNA(Trp) + L-tryptophan + ATP = L-tryptophyl-tRNA(Trp) + AMP + diphosphate + H(+). Functionally, catalyzes the attachment of tryptophan to tRNA(Trp). The protein is Tryptophan--tRNA ligase of Thermosynechococcus vestitus (strain NIES-2133 / IAM M-273 / BP-1).